We begin with the raw amino-acid sequence, 336 residues long: DNA-directed RNA polymerase subunit alpha (336 aa).

The interval 1–238 (MNDLDLNLVP…NLFLPFLQAE (238 aa)) is alpha N-terminal domain (alpha-NTD). The tract at residues 267–336 (AKKVTFQHIF…LQKRFGMRLQ (70 aa)) is alpha C-terminal domain (alpha-CTD).

The protein belongs to the RNA polymerase alpha chain family. In plastids the minimal PEP RNA polymerase catalytic core is composed of four subunits: alpha, beta, beta', and beta''. When a (nuclear-encoded) sigma factor is associated with the core the holoenzyme is formed, which can initiate transcription.

It is found in the plastid. It localises to the chloroplast. The enzyme catalyses RNA(n) + a ribonucleoside 5'-triphosphate = RNA(n+1) + diphosphate. DNA-dependent RNA polymerase catalyzes the transcription of DNA into RNA using the four ribonucleoside triphosphates as substrates. This is DNA-directed RNA polymerase subunit alpha from Huperzia lucidula (Shining clubmoss).